Consider the following 652-residue polypeptide: DNA mismatch repair protein MutL (652 aa).

Belongs to the DNA mismatch repair MutL/HexB family.

Functionally, this protein is involved in the repair of mismatches in DNA. It is required for dam-dependent methyl-directed DNA mismatch repair. May act as a 'molecular matchmaker', a protein that promotes the formation of a stable complex between two or more DNA-binding proteins in an ATP-dependent manner without itself being part of a final effector complex. This Aliivibrio salmonicida (strain LFI1238) (Vibrio salmonicida (strain LFI1238)) protein is DNA mismatch repair protein MutL.